The sequence spans 87 residues: Cell division protein FtsL (87 aa).

The Cytoplasmic portion of the chain corresponds to 1 to 6; the sequence is MNKSNF. Residues 7-23 form a helical membrane-spanning segment; that stretch reads FLLLAVCVSAFSVVMQQ. Over 24-87 the chain is Periplasmic; the sequence is NQYRLNFTAL…GNTFMVEHQR (64 aa). Residues 31–71 are a coiled coil; it reads TALDKAKKQEIALEQDYAQMRLQQARLANHEAIRAAAEKQN. The disordered stretch occupies residues 68–87; sequence EKQNLHPPVSGNTFMVEHQR.

This sequence belongs to the FtsL family. In terms of assembly, part of a complex composed of FtsB, FtsL and FtsQ.

The protein localises to the cell inner membrane. Essential cell division protein. May link together the upstream cell division proteins, which are predominantly cytoplasmic, with the downstream cell division proteins, which are predominantly periplasmic. In Neisseria gonorrhoeae (strain ATCC 700825 / FA 1090), this protein is Cell division protein FtsL.